A 275-amino-acid polypeptide reads, in one-letter code: 5'-nucleotidase SurE (275 aa).

A divalent metal cation-binding residues include Asp-12, Asp-13, Ser-44, and Asn-102.

Belongs to the SurE nucleotidase family. A divalent metal cation is required as a cofactor.

The protein resides in the cytoplasm. The enzyme catalyses a ribonucleoside 5'-phosphate + H2O = a ribonucleoside + phosphate. Its function is as follows. Nucleotidase that shows phosphatase activity on nucleoside 5'-monophosphates. The sequence is that of 5'-nucleotidase SurE from Synechococcus sp. (strain RCC307).